A 510-amino-acid chain; its full sequence is Histidine ammonia-lyase (510 aa).

The segment at residues 145–147 (ASG) is a cross-link (5-imidazolinone (Ala-Gly)). The residue at position 146 (S146) is a 2,3-didehydroalanine (Ser).

It belongs to the PAL/histidase family. In terms of processing, contains an active site 4-methylidene-imidazol-5-one (MIO), which is formed autocatalytically by cyclization and dehydration of residues Ala-Ser-Gly.

It is found in the cytoplasm. The enzyme catalyses L-histidine = trans-urocanate + NH4(+). Its pathway is amino-acid degradation; L-histidine degradation into L-glutamate; N-formimidoyl-L-glutamate from L-histidine: step 1/3. The protein is Histidine ammonia-lyase of Stigmatella aurantiaca.